The chain runs to 463 residues: Perilipin-5 (463 aa).

A disordered region spans residues 1–32; sequence MDQRGEDTTLAPHSRMSGDQTAQDPGSSLGEL. The tract at residues 1–123 is interaction with LIPE; that stretch reads MDQRGEDTTL…KLEEKLPFLQ (123 aa). The segment at 1–188 is essential for lipid droplet targeting; the sequence is MDQRGEDTTL…RFLPMTEAEL (188 aa). 3 positions are modified to phosphoserine: S17, S163, and S337. Over residues 17-26 the composition is skewed to polar residues; sequence SGDQTAQDPG. The interaction with PNPLA2 and ABHD5 stretch occupies residues 200–463; sequence VGTVEEQRQQ…KHTMMPELDF (264 aa). Residues 433–463 form a disordered region; the sequence is AWEAESADPGGQEAEPPRGQGKHTMMPELDF. The tract at residues 444–463 is necessary for mitochondria recruitment at the lipid droplet surface; that stretch reads QEAEPPRGQGKHTMMPELDF.

The protein belongs to the perilipin family. In terms of assembly, homooligomer. Interacts with PNPLA2; prevents interaction of PNPLA2 with ABHD5. Interacts with ABHD5; targets ABHD5 to lipid droplets and promotes interaction of ABHD5 with PNPLA2. Interacts with LIPE. In terms of processing, phosphorylated by PKA. Phosphorylated on serine in skeletal muscle at rest or with lipolytic stimulation. As to expression, highly expressed in oxidative tissues, including heart, liver, brown adipose tissue (BAT) and slow-twitch fibers of skeletal muscle. Lower expression in epididymal white adipose tissue and anterior tibialis and quadriceps. Expressed in adrenal glands. Isoform 2 has the highest expression in heart.

The protein resides in the lipid droplet. The protein localises to the cytoplasm. It is found in the mitochondrion. Functionally, lipid droplet-associated protein that maintains the balance between lipogenesis and lipolysis and also regulates fatty acid oxidation in oxidative tissues. Recruits mitochondria to the surface of lipid droplets and is involved in lipid droplet homeostasis by regulating both the storage of fatty acids in the form of triglycerides and the release of fatty acids for mitochondrial fatty acid oxidation. In lipid droplet triacylglycerol hydrolysis, plays a role as a scaffolding protein for three major key lipolytic players: ABHD5, PNPLA2 and LIPE. Reduces the triacylglycerol hydrolase activity of PNPLA2 by recruiting and sequestering PNPLA2 to lipid droplets. Phosphorylation by PKA enables lipolysis probably by promoting release of ABHD5 from the perilipin scaffold and by facilitating interaction of ABHD5 with PNPLA2. Also increases lipolysis through interaction with LIPE and upon PKA-mediated phosphorylation of LIPE. The polypeptide is Perilipin-5 (Plin5) (Mus musculus (Mouse)).